Consider the following 494-residue polypeptide: Glutamyl-tRNA(Gln) amidotransferase subunit A (494 aa).

Active-site charge relay system residues include Lys79 and Ser159. Ser183 (acyl-ester intermediate) is an active-site residue.

This sequence belongs to the amidase family. GatA subfamily. As to quaternary structure, heterotrimer of A, B and C subunits.

It catalyses the reaction L-glutamyl-tRNA(Gln) + L-glutamine + ATP + H2O = L-glutaminyl-tRNA(Gln) + L-glutamate + ADP + phosphate + H(+). Its function is as follows. Allows the formation of correctly charged Gln-tRNA(Gln) through the transamidation of misacylated Glu-tRNA(Gln) in organisms which lack glutaminyl-tRNA synthetase. The reaction takes place in the presence of glutamine and ATP through an activated gamma-phospho-Glu-tRNA(Gln). This is Glutamyl-tRNA(Gln) amidotransferase subunit A from Bartonella bacilliformis (strain ATCC 35685 / KC583 / Herrer 020/F12,63).